The sequence spans 162 residues: NADH-quinone oxidoreductase subunit I (162 aa).

4Fe-4S ferredoxin-type domains follow at residues 52–82 (LRRY…IEAG) and 93–122 (TRYD…EGPN). Positions 62, 65, 68, 72, 102, 105, 108, and 112 each coordinate [4Fe-4S] cluster.

The protein belongs to the complex I 23 kDa subunit family. As to quaternary structure, NDH-1 is composed of 14 different subunits. Subunits NuoA, H, J, K, L, M, N constitute the membrane sector of the complex. Requires [4Fe-4S] cluster as cofactor.

It localises to the cell inner membrane. It carries out the reaction a quinone + NADH + 5 H(+)(in) = a quinol + NAD(+) + 4 H(+)(out). NDH-1 shuttles electrons from NADH, via FMN and iron-sulfur (Fe-S) centers, to quinones in the respiratory chain. The immediate electron acceptor for the enzyme in this species is believed to be ubiquinone. Couples the redox reaction to proton translocation (for every two electrons transferred, four hydrogen ions are translocated across the cytoplasmic membrane), and thus conserves the redox energy in a proton gradient. The chain is NADH-quinone oxidoreductase subunit I from Methylobacterium sp. (strain 4-46).